Consider the following 141-residue polypeptide: Nucleoside diphosphate kinase (141 aa).

The ATP site is built by lysine 9, phenylalanine 57, arginine 85, threonine 91, arginine 102, and asparagine 112. Residue histidine 115 is the Pros-phosphohistidine intermediate of the active site.

This sequence belongs to the NDK family. As to quaternary structure, homotetramer. Mg(2+) serves as cofactor.

It localises to the cytoplasm. The catalysed reaction is a 2'-deoxyribonucleoside 5'-diphosphate + ATP = a 2'-deoxyribonucleoside 5'-triphosphate + ADP. It catalyses the reaction a ribonucleoside 5'-diphosphate + ATP = a ribonucleoside 5'-triphosphate + ADP. Its function is as follows. Major role in the synthesis of nucleoside triphosphates other than ATP. The ATP gamma phosphate is transferred to the NDP beta phosphate via a ping-pong mechanism, using a phosphorylated active-site intermediate. The polypeptide is Nucleoside diphosphate kinase (Chlamydia abortus (strain DSM 27085 / S26/3) (Chlamydophila abortus)).